The sequence spans 314 residues: Ribosomal RNA small subunit methyltransferase H (314 aa).

Residues 35 to 37, Asp55, Phe79, Asp101, and Gln108 contribute to the S-adenosyl-L-methionine site; that span reads GGH.

It belongs to the methyltransferase superfamily. RsmH family.

It is found in the cytoplasm. The catalysed reaction is cytidine(1402) in 16S rRNA + S-adenosyl-L-methionine = N(4)-methylcytidine(1402) in 16S rRNA + S-adenosyl-L-homocysteine + H(+). Functionally, specifically methylates the N4 position of cytidine in position 1402 (C1402) of 16S rRNA. This is Ribosomal RNA small subunit methyltransferase H from Pectobacterium carotovorum subsp. carotovorum (strain PC1).